Consider the following 1088-residue polypeptide: Receptor-type guanylate cyclase gcy-17 (1088 aa).

A signal peptide spans 1–20 (MLFLRLFIFTPFLILANCQA). The Extracellular segment spans residues 21–480 (RRTIKVGLLF…PPDFVRDYLV (460 aa)). N-linked (GlcNAc...) asparagine glycans are attached at residues Asn33, Asn235, Asn251, Asn321, Asn381, Asn419, and Asn434. Residues 481 to 501 (IVIIIVMFLIFAVSAAVGAVF) form a helical membrane-spanning segment. The Cytoplasmic portion of the chain corresponds to 502-1088 (YAIRQKRKEI…SMARSITPEI (587 aa)). The segment at 529–552 (SKKSKSEASQRSFASGPSTSTKLT) is disordered. Positions 535–552 (EASQRSFASGPSTSTKLT) are enriched in polar residues. The 290-residue stretch at 535 to 824 (EASQRSFASG…KGNLMDHVFN (290 aa)) folds into the Protein kinase domain. Residues 826–854 (LETYASTLEEEVNERTKELVEEQKKSDVL) are a coiled coil. The region spanning 882–1012 (TIFFSDVVQF…DAVNTASRME (131 aa)) is the Guanylate cyclase domain. Residues 1069–1088 (SNMRKRENTPSMARSITPEI) are disordered.

The protein belongs to the adenylyl cyclase class-4/guanylyl cyclase family. As to expression, expressed in PHA sensory neurons.

The protein resides in the cell membrane. The enzyme catalyses GTP = 3',5'-cyclic GMP + diphosphate. In terms of biological role, guanylate cyclase involved in the production of the second messenger cGMP. This chain is Receptor-type guanylate cyclase gcy-17, found in Caenorhabditis elegans.